The following is a 359-amino-acid chain: MGAMRDKILSVLEDYDKANIHIGTIGSHSALNILKGAKDEGFSTVCICREREKKVYESFGVADKFVIVSDYSDLLDENIQEELRHLNTILIPHGSFNAYIGKFDSLLLPMFGNRELMIWETDRDRQREWLERSGVRMPKKYSRPEEIEGLAIVKYPGAKGGKGYFIVSSPEEFYEISDEMVKKGLIGEEDIKNAEIQEYILGANIYFSFFYSPVYGRVELIAVDRRYESTADALGKVPAKEQIRANINPTYTVIGNFPVVLRESLLVQAFEAAEGIVEVSKEIAYPGMVGAFCIESIFDENALMYVFEISARIVAGTNVGIPTSPYSYILFGENMYMGRRIAREIKLAAEKDMLGELIY.

5-amino-1-(5-phospho-beta-D-ribosyl)imidazole-4-carboxamide contacts are provided by His28 and Ser95. The 232-residue stretch at 115-346 folds into the ATP-grasp domain; that stretch reads ELMIWETDRD…MGRRIAREIK (232 aa). Residues 144 to 206 and Glu228 each bind ATP; that span reads PEEI…ANIY. Asn256 provides a ligand contact to 5-amino-1-(5-phospho-beta-D-ribosyl)imidazole-4-carboxamide. Residues Glu295 and Glu308 each contribute to the Mg(2+) site.

Belongs to the phosphohexose mutase family. Mg(2+) serves as cofactor. Mn(2+) is required as a cofactor.

It catalyses the reaction 5-amino-1-(5-phospho-beta-D-ribosyl)imidazole-4-carboxamide + formate + ATP = 5-formamido-1-(5-phospho-D-ribosyl)imidazole-4-carboxamide + ADP + phosphate. It participates in purine metabolism; IMP biosynthesis via de novo pathway; 5-formamido-1-(5-phospho-D-ribosyl)imidazole-4-carboxamide from 5-amino-1-(5-phospho-D-ribosyl)imidazole-4-carboxamide (formate route): step 1/1. Functionally, catalyzes the ATP- and formate-dependent formylation of 5-aminoimidazole-4-carboxamide-1-beta-d-ribofuranosyl 5'-monophosphate (AICAR) to 5-formaminoimidazole-4-carboxamide-1-beta-d-ribofuranosyl 5'-monophosphate (FAICAR) in the absence of folates. This Archaeoglobus fulgidus (strain ATCC 49558 / DSM 4304 / JCM 9628 / NBRC 100126 / VC-16) protein is 5-formaminoimidazole-4-carboxamide-1-(beta)-D-ribofuranosyl 5'-monophosphate synthetase.